The following is a 329-amino-acid chain: Malate dehydrogenase (329 aa).

Residue 12 to 18 coordinates NAD(+); that stretch reads GAAGQIG. Arg93 and Arg99 together coordinate substrate. Residues Asn106, Gln113, and 130-132 each bind NAD(+); that span reads VGN. The substrate site is built by Asn132 and Arg163. The active-site Proton acceptor is His188.

The protein belongs to the LDH/MDH superfamily. MDH type 2 family.

It carries out the reaction (S)-malate + NAD(+) = oxaloacetate + NADH + H(+). Catalyzes the reversible oxidation of malate to oxaloacetate. The sequence is that of Malate dehydrogenase from Streptomyces griseus subsp. griseus (strain JCM 4626 / CBS 651.72 / NBRC 13350 / KCC S-0626 / ISP 5235).